A 448-amino-acid chain; its full sequence is MGKYFGTDGFRGEANKTLTVEHAYKVGRFLGWYYGKDHKAKVAIGKDTRRSSYMFEYSLVAGLTASGADVYLLHVTPTPSVSYVVRSEGFDCGIMISASHNPFQDNGIKVINGGGYKLENEVEKLIEDYIDGEIPEIPFAFGENIGKTVDYSMGRHRYIGHLISLATRSFKGIKVGLDLANGSATTVAKGVFDALGAKTYVIHGEPDGVNINSDCGSTHIEQLQKFVVEQGLDIGFAYDGDADRCLAVDELGQVIDGDAILYLCGCYMKERGELRNNTVVTTIMSNLGLYKSLDAKEIGYAKTAVGDKYVFENMMEHGHSIGGEQSGHIIFNKHATTGDGVLTSLKIMEVMLEKKEKISVLLRELKIYPQLLLNIPVVDKKMAKNDPDVMEAAKAVELELGDEGRILVRESGTESVIRVMVEAGSNEVCQKYADNVVVVLRQKGHIKA.

The active-site Phosphoserine intermediate is the S99. The Mg(2+) site is built by S99, D239, D241, and D243. Residue S99 is modified to Phosphoserine.

This sequence belongs to the phosphohexose mutase family. Mg(2+) serves as cofactor. In terms of processing, activated by phosphorylation.

It catalyses the reaction alpha-D-glucosamine 1-phosphate = D-glucosamine 6-phosphate. Catalyzes the conversion of glucosamine-6-phosphate to glucosamine-1-phosphate. The sequence is that of Phosphoglucosamine mutase from Lachnoclostridium phytofermentans (strain ATCC 700394 / DSM 18823 / ISDg) (Clostridium phytofermentans).